We begin with the raw amino-acid sequence, 131 residues long: Small ribosomal subunit protein uS9 (131 aa).

The protein belongs to the universal ribosomal protein uS9 family.

This Mesoplasma florum (strain ATCC 33453 / NBRC 100688 / NCTC 11704 / L1) (Acholeplasma florum) protein is Small ribosomal subunit protein uS9.